The primary structure comprises 698 residues: Sialic acid-binding Ig-like lectin 11 (698 aa).

Residues 1-27 (MVPGQAQPQSPEMLLLPLLLPVLGAGS) form the signal peptide. Residues 28-561 (LNKDPSYSLQ…KLEHGGGLGL (534 aa)) lie on the Extracellular side of the membrane. The 104-residue stretch at 31 to 134 (DPSYSLQVQR…DEAWYFFRVE (104 aa)) folds into the Ig-like V-type domain. 3 cysteine pairs are disulfide-bonded: Cys-49–Cys-186, Cys-54–Cys-114, and Cys-177–Cys-228. Asn-55 and Asn-90 each carry an N-linked (GlcNAc...) asparagine glycan. Position 132 (Arg-132) interacts with N-acetylneuraminate. 3 Ig-like C2-type domains span residues 159 to 244 (PDVY…RTVR), 251 to 350 (PKDL…LDLS), and 355 to 452 (PENL…LSLS). The N-linked (GlcNAc...) asparagine glycan is linked to Asn-262. A disulfide bridge links Cys-287 with Cys-334. 2 N-linked (GlcNAc...) asparagine glycosylation sites follow: Asn-366 and Asn-375. A disulfide bridge connects residues Cys-391 and Cys-436. 2 N-linked (GlcNAc...) asparagine glycosylation sites follow: Asn-497 and Asn-515. Residues 562-584 (GAALGAGVAALLAFCSCLVVFRV) form a helical membrane-spanning segment. Residues 585–698 (KICRKEARKR…EREMSGMVPK (114 aa)) lie on the Cytoplasmic side of the membrane. The segment at 596–635 (AAEQDVPSTLGPISQGHQHECSAGSSQDHPPPGAATYTPG) is disordered. An ITIM motif motif is present at residues 642–647 (LHYASL). Tyr-668 is modified (phosphotyrosine). The interval 675–698 (TGQPLRGPGFGLQLEREMSGMVPK) is disordered.

Belongs to the immunoglobulin superfamily. SIGLEC (sialic acid binding Ig-like lectin) family. Interacts with PTPN6/SHP-1 and PTPN11/SHP-2 upon phosphorylation. Post-translationally, phosphorylated on tyrosine residues. Expressed by macrophages in various tissues including Kupffer cells. Also found in brain microglia.

Its subcellular location is the membrane. Putative adhesion molecule that mediates sialic-acid dependent binding to cells. Preferentially binds to alpha-2,8-linked sialic acid. The sialic acid recognition site may be masked by cis interactions with sialic acids on the same cell surface. In the immune response, may act as an inhibitory receptor upon ligand induced tyrosine phosphorylation by recruiting cytoplasmic phosphatase(s) via their SH2 domain(s) that block signal transduction through dephosphorylation of signaling molecules. This chain is Sialic acid-binding Ig-like lectin 11 (SIGLEC11), found in Homo sapiens (Human).